Reading from the N-terminus, the 504-residue chain is Xylose import ATP-binding protein XylG (504 aa).

ABC transporter domains are found at residues 5-242 (LEMK…VGRE) and 259-500 (LRVE…VMEA). Residue 37-44 (GENGSGKS) participates in ATP binding.

This sequence belongs to the ABC transporter superfamily. Xylose importer (TC 3.A.1.2.4) family. The complex is composed of two ATP-binding proteins (XylG), two transmembrane proteins (XylH) and a solute-binding protein (XylF).

It localises to the cell inner membrane. It carries out the reaction D-xylose(out) + ATP + H2O = D-xylose(in) + ADP + phosphate + H(+). Its function is as follows. Part of the ABC transporter complex XylFGH involved in xylose import. Responsible for energy coupling to the transport system. The polypeptide is Xylose import ATP-binding protein XylG (Histophilus somni (strain 129Pt) (Haemophilus somnus)).